The chain runs to 419 residues: MQTFLKGKRVGYWLSEKKVKKLNFQAFAELCRKRGIEVVQLNLSRPIEEQGPLDVIIHKLTDVILEADQNDSQSLELVHRFQEYIDAHPETIVLDPLPAIRTLLDRSKSYELIRKIEAYMKDDRICSPPFMELTSLCGEDTMRLLEQNGLAFPFICKTRVAHGTNSHEMAIVFNQEGLNAIQPPCVVQNFINHNAVLYKVFVVGESYTVVQRPSLKNFSAGTSDRESIFFNSHNVSKPESSSVLTELDKIEGVFERPSDEVIRELSRALRQALGVSLFGIDIIINNQTGQHAVIDVNAFPGYEGVSEFFTDLLNHIATVLQGQSTGGAATEEVAPLRHNRLLAEPAGSLAGERTCSASPGCCGSMKGQDTPWKTETEAGNMGAGASAKLPHQRLGCTTGVSPSFQQHCVASLATKASSQ.

Lys-18 provides a ligand contact to 1D-myo-inositol 1,3,4-trisphosphate. ATP-binding residues include Arg-106 and Lys-157. Residues 117-334 enclose the ATP-grasp domain; it reads EAYMKDDRIC…TGGAATEEVA (218 aa). 1D-myo-inositol 1,3,4-trisphosphate is bound by residues His-167 and Lys-199. ATP contacts are provided by residues 188–199, Ser-214, Ser-232, and Ser-236; that span reads QNFINHNAVLYK. Mg(2+) contacts are provided by Asp-281, Asp-295, and Asn-297. Asn-297 lines the 1D-myo-inositol 1,3,4-trisphosphate pocket. Lys-388 is modified (N6-acetyllysine; by EP300 and CREBBP). Ser-401 carries the post-translational modification Phosphoserine. At Lys-415 the chain carries N6-acetyllysine; by EP300 and CREBBP.

Belongs to the ITPK1 family. In terms of assembly, monomer. Interacts with GPS1/COPS1. Mg(2+) serves as cofactor. In terms of processing, acetylation by EP300 and CREBBP destabilizes ITPK1, and down-regulates enzymatic activity. Deacetylated by SIRT1.

It catalyses the reaction 1D-myo-inositol 3,4,5,6-tetrakisphosphate + ATP = 1D-myo-inositol 1,3,4,5,6-pentakisphosphate + ADP + H(+). The enzyme catalyses 1D-myo-inositol 1,3,4-trisphosphate + ATP = 1D-myo-inositol 1,3,4,5-tetrakisphosphate + ADP + H(+). The catalysed reaction is 1D-myo-inositol 1,3,4-trisphosphate + ATP = 1D-myo-inositol 1,3,4,6-tetrakisphosphate + ADP + H(+). It carries out the reaction 1D-myo-inositol 3,4,6-trisphosphate + ATP = 1D-myo-inositol 1,3,4,6-tetrakisphosphate + ADP + H(+). It catalyses the reaction 1D-myo-inositol 1,3,4-trisphosphate + 1D-myo-inositol 1,3,4,5,6-pentakisphosphate = 1D-myo-inositol 3,4,5,6-tetrakisphosphate + 1D-myo-inositol 1,3,4,6-tetrakisphosphate. The enzyme catalyses 1D-myo-inositol 1,3,4-trisphosphate + 1D-myo-inositol 1,3,4,5,6-pentakisphosphate = 1D-myo-inositol 3,4,5,6-tetrakisphosphate + 1D-myo-inositol 1,3,4,5-tetrakisphosphate. In terms of biological role, kinase that can phosphorylate various inositol polyphosphate such as Ins(3,4,5,6)P4 or Ins(1,3,4)P3. Phosphorylates Ins(3,4,5,6)P4 at position 1 to form Ins(1,3,4,5,6)P5. This reaction is thought to have regulatory importance, since Ins(3,4,5,6)P4 is an inhibitor of plasma membrane Ca(2+)-activated Cl(-) channels, while Ins(1,3,4,5,6)P5 is not. Also phosphorylates Ins(1,3,4)P3 on O-5 and O-6 to form Ins(1,3,4,6)P4, an essential molecule in the hexakisphosphate (InsP6) pathway. Also acts as an inositol polyphosphate phosphatase that dephosphorylates Ins(1,3,4,5)P4 and Ins(1,3,4,6)P4 to Ins(1,3,4)P3, and Ins(1,3,4,5,6)P5 to Ins(3,4,5,6)P4. May also act as an isomerase that interconverts the inositol tetrakisphosphate isomers Ins(1,3,4,5)P4 and Ins(1,3,4,6)P4 in the presence of ADP and magnesium. Probably acts as the rate-limiting enzyme of the InsP6 pathway. Modifies TNF-alpha-induced apoptosis by interfering with the activation of TNFRSF1A-associated death domain. Plays an important role in MLKL-mediated necroptosis. Produces highly phosphorylated inositol phosphates such as inositolhexakisphosphate (InsP6) which bind to MLKL mediating the release of an N-terminal auto-inhibitory region leading to its activation. Essential for activated phospho-MLKL to oligomerize and localize to the cell membrane during necroptosis. This chain is Inositol-tetrakisphosphate 1-kinase, found in Mus musculus (Mouse).